Consider the following 408-residue polypeptide: Elongation factor Tu (408 aa).

The tr-type G domain maps to 10–219; that stretch reads KTHVNVGTIG…ALDTYIPDPV (210 aa). GTP is bound by residues 19–26, 88–92, and 143–146; these read GHVDHGKT, DCPGH, and NKCD. Thr-26 is a binding site for Mg(2+).

Belongs to the TRAFAC class translation factor GTPase superfamily. Classic translation factor GTPase family. EF-Tu/EF-1A subfamily. Monomer.

It localises to the cytoplasm. It catalyses the reaction GTP + H2O = GDP + phosphate + H(+). Functionally, GTP hydrolase that promotes the GTP-dependent binding of aminoacyl-tRNA to the A-site of ribosomes during protein biosynthesis. This is Elongation factor Tu from Brachyspira hyodysenteriae (strain ATCC 49526 / WA1).